A 130-amino-acid chain; its full sequence is Small ribosomal subunit protein uS9 (130 aa).

Belongs to the universal ribosomal protein uS9 family.

This is Small ribosomal subunit protein uS9 from Exiguobacterium sibiricum (strain DSM 17290 / CCUG 55495 / CIP 109462 / JCM 13490 / 255-15).